Reading from the N-terminus, the 362-residue chain is S-adenosylmethionine decarboxylase proenzyme 2 (362 aa).

Residues glutamate 9 and glutamate 12 contribute to the active site. Glutamate 68 contributes to the substrate binding site. Serine 69 acts as the Schiff-base intermediate with substrate; via pyruvic acid in catalysis. A Pyruvic acid (Ser); by autocatalysis modification is found at serine 69. Cysteine 83 (proton donor; for catalytic activity) is an active-site residue. Active-site proton acceptor; for processing activity residues include serine 232 and histidine 245. Residue glutamate 249 participates in substrate binding.

The protein belongs to the eukaryotic AdoMetDC family. Pyruvate is required as a cofactor. In terms of processing, is synthesized initially as an inactive proenzyme. Formation of the active enzyme involves a self-maturation process in which the active site pyruvoyl group is generated from an internal serine residue via an autocatalytic post-translational modification. Two non-identical subunits are generated from the proenzyme in this reaction, and the pyruvate is formed at the N-terminus of the alpha chain, which is derived from the carboxyl end of the proenzyme. The post-translation cleavage follows an unusual pathway, termed non-hydrolytic serinolysis, in which the side chain hydroxyl group of the serine supplies its oxygen atom to form the C-terminus of the beta chain, while the remainder of the serine residue undergoes an oxidative deamination to produce ammonia and the pyruvoyl group blocking the N-terminus of the alpha chain.

It catalyses the reaction S-adenosyl-L-methionine + H(+) = S-adenosyl 3-(methylsulfanyl)propylamine + CO2. Its pathway is amine and polyamine biosynthesis; S-adenosylmethioninamine biosynthesis; S-adenosylmethioninamine from S-adenosyl-L-methionine: step 1/1. In terms of biological role, essential for biosynthesis of the polyamines spermidine and spermine. Essential for polyamine homeostasis, and normal plant embryogenesis, growth and development. In Arabidopsis thaliana (Mouse-ear cress), this protein is S-adenosylmethionine decarboxylase proenzyme 2.